The following is a 182-amino-acid chain: Dirigent protein 1 (182 aa).

The N-terminal stretch at 1 to 24 (MAKRFLLLLPLLSSILLLAVSVTA) is a signal peptide. Asparagine 125 carries N-linked (GlcNAc...) asparagine glycosylation.

The protein belongs to the plant dirigent protein family. As to quaternary structure, homodimer.

Its subcellular location is the secreted. It localises to the extracellular space. The protein resides in the apoplast. Its function is as follows. Dirigent proteins impart stereoselectivity on the phenoxy radical-coupling reaction, yielding optically active lignans from two molecules of coniferyl alcohol in the biosynthesis of lignans, flavonolignans, and alkaloids and thus plays a central role in plant secondary metabolism. The polypeptide is Dirigent protein 1 (DIR1) (Arabidopsis thaliana (Mouse-ear cress)).